We begin with the raw amino-acid sequence, 743 residues long: Putative metallophosphoesterase At3g03305 (743 aa).

A signal peptide spans 1 to 40; sequence MESIGDDDELRSKTVSLPRRISFTILLLLLLISLSTRVSG. Residues Asp-66, His-68, and Asp-101 each contribute to the a divalent metal cation site. The next 5 helical transmembrane spans lie at 514–534, 565–585, 623–643, 687–704, and 716–736; these read ILWPALYSLFLVFLIPKCIII, MPVVWFGYMAYLFYLIFFPWF, VMVVVIPHVVFVVIPSVLVVC, LFRKSVLLASLALYWKHF, and MNVVHFPGYSLVVPLLLLYVI.

This sequence belongs to the metallophosphoesterase superfamily. A divalent metal cation is required as a cofactor.

The protein localises to the membrane. This Arabidopsis thaliana (Mouse-ear cress) protein is Putative metallophosphoesterase At3g03305.